A 276-amino-acid chain; its full sequence is Proteasome subunit beta type-8 (276 aa).

Residues 1 to 33 (MALLDVCGAPRGQRPESALPVAGSGRRSDPGHY) are disordered. The propeptide at 1-72 (MALLDVCGAP…RNVQIEMAHG (72 aa)) is removed in mature form. Aspartate 5 is modified (phosphothreonine). Threonine 73 serves as the catalytic Nucleophile.

It belongs to the peptidase T1B family. In terms of assembly, the 26S proteasome consists of a 20S proteasome core and two 19S regulatory subunits. The 20S proteasome core is composed of 28 subunits that are arranged in four stacked rings, resulting in a barrel-shaped structure. The two end rings are each formed by seven alpha subunits, and the two central rings are each formed by seven beta subunits. The catalytic chamber with the active sites is on the inside of the barrel. Component of the immunoproteasome, where it displaces the equivalent housekeeping subunit PSMB5. Component of the spermatoproteasome, a form of the proteasome specifically found in testis. Directly interacts with POMP. Interacts with TAP1. As to quaternary structure, (Microbial infection) Interacts with HIV-1 TAT protein. Autocleaved. The resulting N-terminal Thr residue of the mature subunit is responsible for the nucleophile proteolytic activity.

The protein resides in the cytoplasm. It is found in the nucleus. The catalysed reaction is Cleavage of peptide bonds with very broad specificity.. Functionally, the proteasome is a multicatalytic proteinase complex which is characterized by its ability to cleave peptides with Arg, Phe, Tyr, Leu, and Glu adjacent to the leaving group at neutral or slightly basic pH. The proteasome has an ATP-dependent proteolytic activity. This subunit is involved in antigen processing to generate class I binding peptides. Replacement of PSMB5 by PSMB8 increases the capacity of the immunoproteasome to cleave model peptides after hydrophobic and basic residues. Involved in the generation of spliced peptides resulting from the ligation of two separate proteasomal cleavage products that are not contiguous in the parental protein. Acts as a major component of interferon gamma-induced sensitivity. Plays a key role in apoptosis via the degradation of the apoptotic inhibitor MCL1. May be involved in the inflammatory response pathway. In cancer cells, substitution of isoform 1 (E2) by isoform 2 (E1) results in immunoproteasome deficiency. Required for the differentiation of preadipocytes into adipocytes. This Homo sapiens (Human) protein is Proteasome subunit beta type-8 (PSMB8).